The following is a 306-amino-acid chain: tRNA dimethylallyltransferase (306 aa).

14–21 (GPTAAGKS) is an ATP binding site. Position 16-21 (16-21 (TAAGKS)) interacts with substrate. Residues 39-42 (DSRL) form an interaction with substrate tRNA region.

It belongs to the IPP transferase family. As to quaternary structure, monomer. The cofactor is Mg(2+).

It carries out the reaction adenosine(37) in tRNA + dimethylallyl diphosphate = N(6)-dimethylallyladenosine(37) in tRNA + diphosphate. Functionally, catalyzes the transfer of a dimethylallyl group onto the adenine at position 37 in tRNAs that read codons beginning with uridine, leading to the formation of N6-(dimethylallyl)adenosine (i(6)A). The chain is tRNA dimethylallyltransferase from Synechococcus elongatus (strain ATCC 33912 / PCC 7942 / FACHB-805) (Anacystis nidulans R2).